Here is a 173-residue protein sequence, read N- to C-terminus: Phosphopantetheine adenylyltransferase (173 aa).

Position 9 (Ser9) interacts with substrate. ATP-binding positions include 9–10 and His17; that span reads SF. Lys41, Thr73, and Arg87 together coordinate substrate. ATP-binding positions include 88 to 90, Glu98, and 123 to 129; these read GVR and YQYLSSS.

The protein belongs to the bacterial CoaD family. As to quaternary structure, homohexamer. It depends on Mg(2+) as a cofactor.

The protein localises to the cytoplasm. The enzyme catalyses (R)-4'-phosphopantetheine + ATP + H(+) = 3'-dephospho-CoA + diphosphate. It functions in the pathway cofactor biosynthesis; coenzyme A biosynthesis; CoA from (R)-pantothenate: step 4/5. Functionally, reversibly transfers an adenylyl group from ATP to 4'-phosphopantetheine, yielding dephospho-CoA (dPCoA) and pyrophosphate. The protein is Phosphopantetheine adenylyltransferase of Limosilactobacillus fermentum (strain NBRC 3956 / LMG 18251) (Lactobacillus fermentum).